A 201-amino-acid chain; its full sequence is CASP-like protein 1E1 (201 aa).

At 1–36 (MESQFRPGFDVSQGAGGRASKFGDVVAPTSSTQLPG) the chain is on the cytoplasmic side. A helical membrane pass occupies residues 37 to 57 (IILRIVAIVLTFISAVVMGAA). Residues 58 to 87 (RQTTTVTGIDAETALLTSITVTVKSTYSAA) lie on the Extracellular side of the membrane. Residues 88–108 (YVYFVVANVLVFFYSVVSLVL) form a helical membrane-spanning segment. The Cytoplasmic portion of the chain corresponds to 109–127 (SMVNKARLTSMSLPFSIAD). Residues 128–148 (LLMVVLLFSSNGAAAAISVVA) traverse the membrane as a helical segment. The Extracellular segment spans residues 149–173 (EKGQQNLAGWDKICNLFGGLCARVN). Residues 174–194 (AAIVLSMLASVAYVILVVFGM) form a helical membrane-spanning segment. Over 195–201 (ANLRRSQ) the chain is Cytoplasmic.

Belongs to the Casparian strip membrane proteins (CASP) family. As to quaternary structure, homodimer and heterodimers.

The protein resides in the cell membrane. In Musa acuminata (Banana), this protein is CASP-like protein 1E1.